The primary structure comprises 495 residues: Probable cytosol aminopeptidase (495 aa).

Lys264 and Asp269 together coordinate Mn(2+). Residue Lys276 is part of the active site. Residues Asp287, Asp346, and Glu348 each contribute to the Mn(2+) site. The active site involves Arg350.

It belongs to the peptidase M17 family. It depends on Mn(2+) as a cofactor.

It is found in the cytoplasm. It carries out the reaction Release of an N-terminal amino acid, Xaa-|-Yaa-, in which Xaa is preferably Leu, but may be other amino acids including Pro although not Arg or Lys, and Yaa may be Pro. Amino acid amides and methyl esters are also readily hydrolyzed, but rates on arylamides are exceedingly low.. The catalysed reaction is Release of an N-terminal amino acid, preferentially leucine, but not glutamic or aspartic acids.. Its function is as follows. Presumably involved in the processing and regular turnover of intracellular proteins. Catalyzes the removal of unsubstituted N-terminal amino acids from various peptides. The chain is Probable cytosol aminopeptidase from Geotalea uraniireducens (strain Rf4) (Geobacter uraniireducens).